Consider the following 179-residue polypeptide: Nuclear transcription factor Y subunit B (179 aa).

The interval 1-32 is disordered; it reads MAEAPASPGGGGGSHESGSPRGGGGGGSVREQ. Gly residues predominate over residues 8 to 28; it reads PGGGGGSHESGSPRGGGGGGS. The DNA-binding element occupies 36 to 42; sequence LPIANIS. The tract at residues 63-74 is subunit association domain (SAD); it reads VQECVSEFISFI. The interval 147–179 is disordered; the sequence is SSSAAEGMGQQGAYNQGMGYMQPQYHNGDISNV.

This sequence belongs to the NFYB/HAP3 subunit family. In terms of assembly, heterotrimeric transcription factor composed of three components, NF-YA, NF-YB and NF-YC. NF-YB and NF-YC must interact and dimerize for NF-YA association and DNA binding.

It is found in the nucleus. Component of the NF-Y/HAP transcription factor complex. The NF-Y complex stimulates the transcription of various genes by recognizing and binding to a CCAAT motif in promoters. The chain is Nuclear transcription factor Y subunit B (NFY2) from Zea mays (Maize).